Consider the following 315-residue polypeptide: 4-hydroxy-3-methylbut-2-enyl diphosphate reductase (315 aa).

Cysteine 12 contributes to the [4Fe-4S] cluster binding site. The (2E)-4-hydroxy-3-methylbut-2-enyl diphosphate site is built by histidine 43 and histidine 81. Positions 43 and 81 each coordinate dimethylallyl diphosphate. Residues histidine 43 and histidine 81 each coordinate isopentenyl diphosphate. A [4Fe-4S] cluster-binding site is contributed by cysteine 103. Histidine 131 serves as a coordination point for (2E)-4-hydroxy-3-methylbut-2-enyl diphosphate. Position 131 (histidine 131) interacts with dimethylallyl diphosphate. Histidine 131 contributes to the isopentenyl diphosphate binding site. The Proton donor role is filled by glutamate 133. (2E)-4-hydroxy-3-methylbut-2-enyl diphosphate is bound at residue threonine 170. Cysteine 198 lines the [4Fe-4S] cluster pocket. Residues serine 226, asparagine 228, and serine 271 each contribute to the (2E)-4-hydroxy-3-methylbut-2-enyl diphosphate site. Residues serine 226, asparagine 228, and serine 271 each contribute to the dimethylallyl diphosphate site. Isopentenyl diphosphate contacts are provided by serine 226, asparagine 228, and serine 271.

It belongs to the IspH family. The cofactor is [4Fe-4S] cluster.

It carries out the reaction isopentenyl diphosphate + 2 oxidized [2Fe-2S]-[ferredoxin] + H2O = (2E)-4-hydroxy-3-methylbut-2-enyl diphosphate + 2 reduced [2Fe-2S]-[ferredoxin] + 2 H(+). The catalysed reaction is dimethylallyl diphosphate + 2 oxidized [2Fe-2S]-[ferredoxin] + H2O = (2E)-4-hydroxy-3-methylbut-2-enyl diphosphate + 2 reduced [2Fe-2S]-[ferredoxin] + 2 H(+). It functions in the pathway isoprenoid biosynthesis; dimethylallyl diphosphate biosynthesis; dimethylallyl diphosphate from (2E)-4-hydroxy-3-methylbutenyl diphosphate: step 1/1. The protein operates within isoprenoid biosynthesis; isopentenyl diphosphate biosynthesis via DXP pathway; isopentenyl diphosphate from 1-deoxy-D-xylulose 5-phosphate: step 6/6. Its function is as follows. Catalyzes the conversion of 1-hydroxy-2-methyl-2-(E)-butenyl 4-diphosphate (HMBPP) into a mixture of isopentenyl diphosphate (IPP) and dimethylallyl diphosphate (DMAPP). Acts in the terminal step of the DOXP/MEP pathway for isoprenoid precursor biosynthesis. The sequence is that of 4-hydroxy-3-methylbut-2-enyl diphosphate reductase from Anoxybacillus flavithermus (strain DSM 21510 / WK1).